We begin with the raw amino-acid sequence, 219 residues long: 2-hydroxy-3-keto-5-methylthiopentenyl-1-phosphate phosphatase (219 aa).

This sequence belongs to the HAD-like hydrolase superfamily. MtnX family.

It catalyses the reaction 2-hydroxy-5-methylsulfanyl-3-oxopent-1-enyl phosphate + H2O = 1,2-dihydroxy-5-(methylsulfanyl)pent-1-en-3-one + phosphate. It participates in amino-acid biosynthesis; L-methionine biosynthesis via salvage pathway; L-methionine from S-methyl-5-thio-alpha-D-ribose 1-phosphate: step 4/6. Its function is as follows. Dephosphorylates 2-hydroxy-3-keto-5-methylthiopentenyl-1-phosphate (HK-MTPenyl-1-P) yielding 1,2-dihydroxy-3-keto-5-methylthiopentene (DHK-MTPene). This chain is 2-hydroxy-3-keto-5-methylthiopentenyl-1-phosphate phosphatase, found in Bacillus cytotoxicus (strain DSM 22905 / CIP 110041 / 391-98 / NVH 391-98).